The following is a 257-amino-acid chain: NAD-capped RNA hydrolase NudC (257 aa).

Residue R69 participates in substrate binding. Zn(2+)-binding residues include C98 and C101. E111 is a binding site for substrate. C116 and C119 together coordinate Zn(2+). Y124 provides a ligand contact to substrate. The Nudix hydrolase domain occupies P125–T248. Positions 158, 174, and 178 each coordinate a divalent metal cation. A Nudix box motif is present at residues G159–G180. Q192–S199 contacts substrate. Residue E219 participates in a divalent metal cation binding. A241 is a binding site for substrate.

Belongs to the Nudix hydrolase family. NudC subfamily. As to quaternary structure, homodimer. The cofactor is Mg(2+). Mn(2+) is required as a cofactor. Zn(2+) serves as cofactor.

It catalyses the reaction a 5'-end NAD(+)-phospho-ribonucleoside in mRNA + H2O = a 5'-end phospho-adenosine-phospho-ribonucleoside in mRNA + beta-nicotinamide D-ribonucleotide + 2 H(+). The enzyme catalyses NAD(+) + H2O = beta-nicotinamide D-ribonucleotide + AMP + 2 H(+). The catalysed reaction is NADH + H2O = reduced beta-nicotinamide D-ribonucleotide + AMP + 2 H(+). MRNA decapping enzyme that specifically removes the nicotinamide adenine dinucleotide (NAD) cap from a subset of mRNAs by hydrolyzing the diphosphate linkage to produce nicotinamide mononucleotide (NMN) and 5' monophosphate mRNA. The NAD-cap is present at the 5'-end of some mRNAs and stabilizes RNA against 5'-processing. Has preference for mRNAs with a 5'-end purine. Catalyzes the hydrolysis of a broad range of dinucleotide pyrophosphates. The polypeptide is NAD-capped RNA hydrolase NudC (Klebsiella pneumoniae subsp. pneumoniae (strain ATCC 700721 / MGH 78578)).